A 151-amino-acid polypeptide reads, in one-letter code: Ribonuclease H (151 aa).

The region spanning 1-141 is the RNase H type-1 domain; that stretch reads MKNVIIYTDG…ADALANRGID (141 aa). D9, E47, D69, and D133 together coordinate Mg(2+).

The protein belongs to the RNase H family. As to quaternary structure, monomer. The cofactor is Mg(2+).

The protein localises to the cytoplasm. It catalyses the reaction Endonucleolytic cleavage to 5'-phosphomonoester.. In terms of biological role, endonuclease that specifically degrades the RNA of RNA-DNA hybrids. This is Ribonuclease H from Alcanivorax borkumensis (strain ATCC 700651 / DSM 11573 / NCIMB 13689 / SK2).